A 109-amino-acid polypeptide reads, in one-letter code: uncharacterized protein (109 aa).

Residues 10 to 109 (APFEYTLSLI…WGMAQGGPHM (100 aa)) enclose the HTH hxlR-type domain.

This is an uncharacterized protein from Bacillus subtilis (strain 168).